The following is a 195-amino-acid chain: Peptidyl-tRNA hydrolase (195 aa).

Position 17 (Tyr17) interacts with tRNA. The active-site Proton acceptor is His22. The tRNA site is built by Phe68, Asn70, and Asn116.

Belongs to the PTH family. Monomer.

Its subcellular location is the cytoplasm. The enzyme catalyses an N-acyl-L-alpha-aminoacyl-tRNA + H2O = an N-acyl-L-amino acid + a tRNA + H(+). Functionally, hydrolyzes ribosome-free peptidyl-tRNAs (with 1 or more amino acids incorporated), which drop off the ribosome during protein synthesis, or as a result of ribosome stalling. In terms of biological role, catalyzes the release of premature peptidyl moieties from peptidyl-tRNA molecules trapped in stalled 50S ribosomal subunits, and thus maintains levels of free tRNAs and 50S ribosomes. The sequence is that of Peptidyl-tRNA hydrolase from Pectobacterium carotovorum subsp. carotovorum (strain PC1).